Consider the following 78-residue polypeptide: Pancreatic polypeptide prohormone (78 aa).

Positions 1–19 are cleaved as a signal peptide; that stretch reads LLLSTCVALLLQPPLGALG. A Tyrosine amide modification is found at Tyr-55.

Belongs to the NPY family.

The protein localises to the secreted. In terms of biological role, hormone secreted by pancreatic cells that acts as a regulator of pancreatic and gastrointestinal functions probably by signaling through the G protein-coupled receptor NPY4R2. The protein is Pancreatic polypeptide prohormone (PPY) of Ovis aries (Sheep).